An 87-amino-acid chain; its full sequence is Phosphoribosyl-ATP pyrophosphatase (87 aa).

It belongs to the PRA-PH family.

Its subcellular location is the cytoplasm. The enzyme catalyses 1-(5-phospho-beta-D-ribosyl)-ATP + H2O = 1-(5-phospho-beta-D-ribosyl)-5'-AMP + diphosphate + H(+). It participates in amino-acid biosynthesis; L-histidine biosynthesis; L-histidine from 5-phospho-alpha-D-ribose 1-diphosphate: step 2/9. The polypeptide is Phosphoribosyl-ATP pyrophosphatase (Bifidobacterium adolescentis (strain ATCC 15703 / DSM 20083 / NCTC 11814 / E194a)).